The sequence spans 192 residues: MAAAKAGASAPEAAGSAEAPLQYSLLLQHLVGDKRQPRLLEPGSLGGIPSPAKSEEQKMIERAMESCAFKAVLACVGGFVLGGAFGVFTAGIDTNVGFDPKDPYRTPTAREVLKDMGQRGMSYAKNFAIVGAMFSCTECLVESYRGKSDWKNSVISGCITGGAIGFRAGVKAGAIGCGGFAAFSAAIDYYLR.

Disulfide bonds link Cys-67–Cys-139 and Cys-158–Cys-177. Helical transmembrane passes span 72-92 (VLACVGGFVLGGAFGVFTAGI), 123-141 (YAKNFAIVGAMFSCTECLV), and 168-188 (AGVKAGAIGCGGFAAFSAAID).

This sequence belongs to the Tim17/Tim22/Tim23 family. In terms of assembly, component of the TIM22 complex, whose core is composed of TIMM22, associated with peripheral protein FXC1/TIMM10B and the 70 kDa heterohexamer. In most cases, the 70 kDa complex is composed of TIMM9 and TIMM10 (TIMM10A or TIMM10B). A small fraction of the 70 kDa complex is composed of TIMM8 (TIMM8A/DDP1 or TIMM8B/DDP2) and TIMM13. The TIM22 complex also contains AGK and TIMM29. Interacts directly with TIMM9, TIMM10A and FXC1/TIMM10B. Interacts (when oxidized) with TIMM29; interaction is direct. Disulfide bonds promote efficient assembly of the TIM22 complex.

It is found in the mitochondrion inner membrane. Essential core component of the TIM22 complex, a complex that mediates the import and insertion of multi-pass transmembrane proteins into the mitochondrial inner membrane. In the TIM22 complex, it constitutes the voltage-activated and signal-gated channel. Forms a twin-pore translocase that uses the membrane potential as external driving force in 2 voltage-dependent steps. This is Mitochondrial import inner membrane translocase subunit Tim22 (Timm22) from Rattus norvegicus (Rat).